Consider the following 1163-residue polypeptide: AF4/FMR2 family member 4 (1163 aa).

The span at 1–19 shows a compositional bias: basic and acidic residues; sequence MNREDRNVLRMKERERRNQ. Disordered stretches follow at residues 1 to 48, 76 to 312, 324 to 904, and 1034 to 1073; these read MNRE…EDKL, AIPK…ASGD, THSW…PRRT, and NSYN…SSGA. Positions 115 to 128 are enriched in polar residues; that stretch reads PSTSQSQKRSSGLQ. The residue at position 120 (Ser-120) is a Phosphoserine. 2 stretches are compositionally biased toward low complexity: residues 129 to 148 and 177 to 194; these read SGHS…NSSG and RSSS…NSSH. Basic and acidic residues predominate over residues 198-217; the sequence is HGNDHHSKEHQRSKSPRDPD. Ser-212 carries the post-translational modification Phosphoserine. Composition is skewed to polar residues over residues 227–251, 273–285, and 350–375; these read PFSS…SMLQ, EHYS…NSMT, and KESQ…NGHQ. 4 positions are modified to phosphoserine: Ser-387, Ser-388, Ser-389, and Ser-392. Positions 403–412 are enriched in polar residues; sequence PRSTPGSNSE. Over residues 413 to 429 the composition is skewed to basic and acidic residues; the sequence is PSHHNSEGADNSRDDSS. Over residues 430 to 462 the composition is skewed to low complexity; that stretch reads SHSGSESSSGSDSESESSSSDSEANEPSQSASP. Residues Ser-487, Ser-490, and Ser-491 each carry the phosphoserine modification. Polar residues-rich tracts occupy residues 488-501, 510-528, and 549-560; these read PASS…SSQG, GTGN…SSAT, and SPAQSDSTTQRR. Ser-549 is subject to Phosphoserine. The segment covering 568–586 has biased composition (basic and acidic residues); it reads KKAEKAAAEEPRGGLKIES. Lys-583 participates in a covalent cross-link: Glycyl lysine isopeptide (Lys-Gly) (interchain with G-Cter in SUMO2). Residues 599–612 are compositionally biased toward basic residues; that stretch reads SRHKAATKGSRKPN. Basic and acidic residues predominate over residues 613 to 627; the sequence is IKKESKSSPRPTAEK. The residue at position 671 (Ser-671) is a Phosphoserine. Thr-674 bears the Phosphothreonine mark. Phosphoserine occurs at positions 680, 694, 703, and 706. Tyr-712 bears the Phosphotyrosine mark. Composition is skewed to basic and acidic residues over residues 730–761, 769–789, and 799–811; these read PYKE…EKVS, KNED…DKNS, and ESSK…EKDL. A Phosphoserine modification is found at Ser-814. An N6-acetyllysine modification is found at Lys-822. Phosphoserine occurs at positions 836, 1043, 1055, 1058, and 1062. The span at 836–862 shows a compositional bias: low complexity; that stretch reads SQSSSLKSSSNSNKETSGSSKNSSSTS. A compositionally biased stretch (low complexity) spans 1062-1073; the sequence is SPGNSGNYSSGA.

The protein belongs to the AF4 family. As to quaternary structure, component of the super elongation complex (SEC), at least composed of EAF1, EAF2, CDK9, MLLT3/AF9, AFF (AFF1 or AFF4), the P-TEFb complex and ELL (ELL, ELL2 or ELL3). Interacts with ELL3; the interaction is direct. Interacts with ELL2; the interaction is direct and leads to stabilize ELL2 and prevent ELL2 ubiquitination and degradation. Dephosphorylated at Ser-549 by the PNUTS-PP1 complex, promoting RNA polymerase II transcription pause-release. In terms of tissue distribution, ubiquitously expressed. Strongly expressed in heart, placenta, skeletal muscle, pancreas and to a lower extent in brain.

It is found in the nucleus. Its subcellular location is the chromosome. Its function is as follows. Key component of the super elongation complex (SEC), a complex required to increase the catalytic rate of RNA polymerase II transcription by suppressing transient pausing by the polymerase at multiple sites along the DNA. In the SEC complex, AFF4 acts as a central scaffold that recruits other factors through direct interactions with ELL proteins (ELL, ELL2 or ELL3) and the P-TEFb complex. In case of infection by HIV-1 virus, the SEC complex is recruited by the viral Tat protein to stimulate viral gene expression. In Homo sapiens (Human), this protein is AF4/FMR2 family member 4 (AFF4).